Consider the following 1181-residue polypeptide: Putative primase (1181 aa).

Residues 1141–1181 (RSHSTMVEHDMDDDESTNKKQELEEEDEECIDIDEYNNERF) are disordered. The segment covering 1163–1181 (LEEEDEECIDIDEYNNERF) has biased composition (acidic residues).

It belongs to the eukaryotic-type primase small subunit family.

In terms of biological role, synthesizes small RNA primers for the Okazaki fragments on both template strands at replication forks during viral DNA synthesis. This is Putative primase from Magallana gigas (Pacific oyster).